Here is a 126-residue protein sequence, read N- to C-terminus: Holo-[acyl-carrier-protein] synthase (126 aa).

Mg(2+) contacts are provided by aspartate 8 and glutamate 57.

The protein belongs to the P-Pant transferase superfamily. AcpS family. Mg(2+) is required as a cofactor.

The protein localises to the cytoplasm. It catalyses the reaction apo-[ACP] + CoA = holo-[ACP] + adenosine 3',5'-bisphosphate + H(+). Transfers the 4'-phosphopantetheine moiety from coenzyme A to a Ser of acyl-carrier-protein. In Trichlorobacter lovleyi (strain ATCC BAA-1151 / DSM 17278 / SZ) (Geobacter lovleyi), this protein is Holo-[acyl-carrier-protein] synthase.